The primary structure comprises 209 residues: Ras-related protein Rab-2-A (209 aa).

Residue 13-21 (GDTGVGKSC) participates in GTP binding. The Effector region signature appears at 35 to 43 (HDLTIGVEF). Residues 61-65 (DTAGQ), 119-122 (NKCD), and 149-151 (SAK) contribute to the GTP site. 2 S-geranylgeranyl cysteine lipidation sites follow: Cys207 and Cys208.

This sequence belongs to the small GTPase superfamily. Rab family.

Its subcellular location is the endoplasmic reticulum membrane. It is found in the golgi apparatus membrane. Functionally, protein transport. Probably involved in vesicular traffic. This chain is Ras-related protein Rab-2-A (RAB2A), found in Zea mays (Maize).